Reading from the N-terminus, the 295-residue chain is Histamine N-methyltransferase (295 aa).

E28 lines the substrate pocket. Residues G60, E89, Q94, S120, and I143 each contribute to the S-adenosyl-L-methionine site. N284 contributes to the substrate binding site.

This sequence belongs to the class I-like SAM-binding methyltransferase superfamily. HNMT family. Monomer.

Its subcellular location is the cytoplasm. The enzyme catalyses histamine + S-adenosyl-L-methionine = N(tau)-methylhistamine + S-adenosyl-L-homocysteine + H(+). In terms of biological role, inactivates histamine by N-methylation. Plays an important role in degrading histamine and in regulating the airway response to histamine. In Mus musculus (Mouse), this protein is Histamine N-methyltransferase (Hnmt).